Reading from the N-terminus, the 78-residue chain is Acyl carrier protein (78 aa).

The Carrier domain maps to 1–77 (MSEVEKKVID…DAIDYIEKNL (77 aa)). Serine 37 bears the O-(pantetheine 4'-phosphoryl)serine mark.

This sequence belongs to the acyl carrier protein (ACP) family. In terms of processing, 4'-phosphopantetheine is transferred from CoA to a specific serine of apo-ACP by AcpS. This modification is essential for activity because fatty acids are bound in thioester linkage to the sulfhydryl of the prosthetic group.

Its subcellular location is the cytoplasm. It participates in lipid metabolism; fatty acid biosynthesis. Carrier of the growing fatty acid chain in fatty acid biosynthesis. The sequence is that of Acyl carrier protein from Porphyromonas gingivalis (strain ATCC 33277 / DSM 20709 / CIP 103683 / JCM 12257 / NCTC 11834 / 2561).